A 1387-amino-acid polypeptide reads, in one-letter code: DNA-directed RNA polymerase subunit beta (1387 aa).

The protein belongs to the RNA polymerase beta chain family. The RNAP catalytic core consists of 2 alpha, 1 beta, 1 beta' and 1 omega subunit. When a sigma factor is associated with the core the holoenzyme is formed, which can initiate transcription.

It carries out the reaction RNA(n) + a ribonucleoside 5'-triphosphate = RNA(n+1) + diphosphate. In terms of biological role, DNA-dependent RNA polymerase catalyzes the transcription of DNA into RNA using the four ribonucleoside triphosphates as substrates. This Xanthomonas campestris pv. campestris (strain 8004) protein is DNA-directed RNA polymerase subunit beta.